Consider the following 489-residue polypeptide: UDP-N-acetylmuramoyl-L-alanyl-D-glutamate--2,6-diaminopimelate ligase (489 aa).

Residue Ser-34 participates in UDP-N-acetyl-alpha-D-muramoyl-L-alanyl-D-glutamate binding. Gly-110–Ser-116 is an ATP binding site. Residues Thr-152–Thr-153, Ser-179, Gln-185, and Arg-187 contribute to the UDP-N-acetyl-alpha-D-muramoyl-L-alanyl-D-glutamate site. Residue Lys-219 is modified to N6-carboxylysine. Residues Arg-383, Asp-407–Arg-410, Gly-455, and Glu-459 contribute to the meso-2,6-diaminopimelate site. Residues Asp-407–Arg-410 carry the Meso-diaminopimelate recognition motif motif.

The protein belongs to the MurCDEF family. MurE subfamily. It depends on Mg(2+) as a cofactor. Carboxylation is probably crucial for Mg(2+) binding and, consequently, for the gamma-phosphate positioning of ATP.

The protein resides in the cytoplasm. It catalyses the reaction UDP-N-acetyl-alpha-D-muramoyl-L-alanyl-D-glutamate + meso-2,6-diaminopimelate + ATP = UDP-N-acetyl-alpha-D-muramoyl-L-alanyl-gamma-D-glutamyl-meso-2,6-diaminopimelate + ADP + phosphate + H(+). Its pathway is cell wall biogenesis; peptidoglycan biosynthesis. Functionally, catalyzes the addition of meso-diaminopimelic acid to the nucleotide precursor UDP-N-acetylmuramoyl-L-alanyl-D-glutamate (UMAG) in the biosynthesis of bacterial cell-wall peptidoglycan. The polypeptide is UDP-N-acetylmuramoyl-L-alanyl-D-glutamate--2,6-diaminopimelate ligase (Agrobacterium fabrum (strain C58 / ATCC 33970) (Agrobacterium tumefaciens (strain C58))).